Reading from the N-terminus, the 504-residue chain is Plasma protease C1 inhibitor (504 aa).

Positions 1 to 22 (MASRLTPLTLLLLLLAGDRAFS) are cleaved as a signal peptide. Residues 22 to 67 (SDPEATSHSTQDPLEAQAKSRESFPERDDSWSPPEPTVLPSTWPTT) are disordered. Residues 39 to 51 (AKSRESFPERDDS) are compositionally biased toward basic and acidic residues. Asparagine 75, asparagine 83, and asparagine 107 each carry an N-linked (GlcNAc...) asparagine glycan. Polar residues predominate over residues 85 to 124 (SFSQHSQPAAQLPTDSPGQPPLNSSSQPSTASDLPTQATT). The interval 85 to 141 (SFSQHSQPAAQLPTDSPGQPPLNSSSQPSTASDLPTQATTEPFCPEPLAQCSDSDRD) is disordered. Disulfide bonds link cysteine 128–cysteine 432 and cysteine 135–cysteine 210. 2 N-linked (GlcNAc...) asparagine glycosylation sites follow: asparagine 243 and asparagine 356.

This sequence belongs to the serpin family. In terms of assembly, interacts with MASP1.

It is found in the secreted. Serine protease inhibitor, which acrs as a regulator of the classical complement pathway. Forms a proteolytically inactive stoichiometric complex with the C1r or C1s proteases. May also regulate blood coagulation, fibrinolysis and the generation of kinins. Very efficient inhibitor of FXIIa. Inhibits chymotrypsin and kallikrein. This chain is Plasma protease C1 inhibitor (Serping1), found in Mus musculus (Mouse).